Reading from the N-terminus, the 465-residue chain is Glutamate--tRNA ligase (465 aa).

The 'HIGH' region signature appears at 11–21; it reads PSPTGFIHLGN. The interval 118–139 is disordered; it reads GEKPRYDGTWRPAPGKILPPPP. Positions 243-247 match the 'KMSKS' region motif; sequence KMSKR. Position 246 (Lys246) interacts with ATP.

This sequence belongs to the class-I aminoacyl-tRNA synthetase family. Glutamate--tRNA ligase type 1 subfamily. Monomer.

The protein resides in the cytoplasm. The enzyme catalyses tRNA(Glu) + L-glutamate + ATP = L-glutamyl-tRNA(Glu) + AMP + diphosphate. Catalyzes the attachment of glutamate to tRNA(Glu) in a two-step reaction: glutamate is first activated by ATP to form Glu-AMP and then transferred to the acceptor end of tRNA(Glu). This chain is Glutamate--tRNA ligase, found in Ralstonia pickettii (strain 12J).